Here is a 350-residue protein sequence, read N- to C-terminus: tRNA uridine(34) hydroxylase (350 aa).

Residues 146-240 form the Rhodanese domain; that stretch reads DDPDALFIDM…YARKAREQGL (95 aa). Residue Cys-200 is the Cysteine persulfide intermediate of the active site.

Belongs to the TrhO family.

The catalysed reaction is uridine(34) in tRNA + AH2 + O2 = 5-hydroxyuridine(34) in tRNA + A + H2O. Catalyzes oxygen-dependent 5-hydroxyuridine (ho5U) modification at position 34 in tRNAs, the first step in 5-carboxymethoxyuridine (cmo5U) biosynthesis. May be part of an alternate pathway, which is able to bypass cmo5U biogenesis in a subset of tRNAs under aerobic conditions. The sequence is that of tRNA uridine(34) hydroxylase from Escherichia coli O9:H4 (strain HS).